Consider the following 692-residue polypeptide: Protein artemis (692 aa).

The residue at position 380 (T380) is a Phosphothreonine. S385 is modified (phosphoserine). Disordered regions lie at residues 504-555 and 640-664; these read LENF…DSQS and STNA…LPKR. The span at 506–520 shows a compositional bias: polar residues; it reads NFPSSTVAGGSQSPK. Over residues 530–543 the composition is skewed to low complexity; sequence THISSQNSSQSTHI. 2 stretches are compositionally biased toward polar residues: residues 544–555 and 640–650; these read TEQGSQGWDSQS and STNADSQSSSD. S645 bears the Phosphoserine; by ATM mark.

This sequence belongs to the DNA repair metallo-beta-lactamase (DRMBL) family. As to quaternary structure, interacts with LIG4; the interaction is direct. Interacts with ATM. Interacts with BRCA1. Interacts with PRKDC. Interacts with TP53BP1. Also exhibits ATM- and phosphorylation-dependent interaction with the MRN complex, composed of MRE11, RAD50, and NBN. Phosphorylation on undefined residues by PRKDC may stimulate endonucleolytic activity on 5' and 3' hairpins and overhangs. PRKDC must remain present, even after phosphorylation, for efficient hairpin opening. Also phosphorylated by ATM in response to ionizing radiation (IR) and by ATR in response to ultraviolet (UV) radiation. As to expression, ubiquitously expressed, with highest levels in the kidney, lung, pancreas and placenta (at the mRNA level). Expression is not increased in thymus or bone marrow, sites of V(D)J recombination.

The protein localises to the nucleus. Nuclease involved in DNA non-homologous end joining (NHEJ); required for double-strand break repair and V(D)J recombination. Required for V(D)J recombination, the process by which exons encoding the antigen-binding domains of immunoglobulins and T-cell receptor proteins are assembled from individual V, (D), and J gene segments. V(D)J recombination is initiated by the lymphoid specific RAG endonuclease complex, which generates site specific DNA double strand breaks (DSBs). These DSBs present two types of DNA end structures: hairpin sealed coding ends and phosphorylated blunt signal ends. These ends are independently repaired by the non homologous end joining (NHEJ) pathway to form coding and signal joints respectively. This protein exhibits single-strand specific 5'-3' exonuclease activity in isolation and acquires endonucleolytic activity on 5' and 3' hairpins and overhangs when in a complex with PRKDC. The latter activity is required specifically for the resolution of closed hairpins prior to the formation of the coding joint. Also required for the repair of complex DSBs induced by ionizing radiation, which require substantial end-processing prior to religation by NHEJ. The chain is Protein artemis from Homo sapiens (Human).